Reading from the N-terminus, the 129-residue chain is Histone H2A-IV (129 aa).

Belongs to the histone H2A family. In terms of assembly, the nucleosome is a histone octamer containing two molecules each of H2A, H2B, H3 and H4 assembled in one H3-H4 heterotetramer and two H2A-H2B heterodimers. The octamer wraps approximately 147 bp of DNA.

It localises to the nucleus. The protein localises to the chromosome. Its function is as follows. Core component of nucleosome. Nucleosomes wrap and compact DNA into chromatin, limiting DNA accessibility to the cellular machineries which require DNA as a template. Histones thereby play a central role in transcription regulation, DNA repair, DNA replication and chromosomal stability. DNA accessibility is regulated via a complex set of post-translational modifications of histones, also called histone code, and nucleosome remodeling. The chain is Histone H2A-IV from Volvox carteri (Green alga).